The following is a 185-amino-acid chain: Ribosome-recycling factor (185 aa).

It belongs to the RRF family.

The protein resides in the cytoplasm. Its function is as follows. Responsible for the release of ribosomes from messenger RNA at the termination of protein biosynthesis. May increase the efficiency of translation by recycling ribosomes from one round of translation to another. This Halothermothrix orenii (strain H 168 / OCM 544 / DSM 9562) protein is Ribosome-recycling factor.